The following is a 483-amino-acid chain: ATP-dependent protease ATPase subunit HslU (483 aa).

ATP contacts are provided by residues V18 and 60 to 65 (GVGKTE). Composition is skewed to low complexity over residues 136-147 (LPGGAPQPAPAQ) and 171-181 (AQADASQASPP). The tract at residues 136 to 212 (LPGGAPQPAP…HGGKLDDREV (77 aa)) is disordered. The span at 182-191 (TGTGSAPDSR) shows a compositional bias: polar residues. The span at 192–209 (SSTREKLRTLWHGGKLDD) shows a compositional bias: basic and acidic residues. The ATP site is built by D296, E361, and R433.

Belongs to the ClpX chaperone family. HslU subfamily. As to quaternary structure, a double ring-shaped homohexamer of HslV is capped on each side by a ring-shaped HslU homohexamer. The assembly of the HslU/HslV complex is dependent on binding of ATP.

The protein resides in the cytoplasm. Functionally, ATPase subunit of a proteasome-like degradation complex; this subunit has chaperone activity. The binding of ATP and its subsequent hydrolysis by HslU are essential for unfolding of protein substrates subsequently hydrolyzed by HslV. HslU recognizes the N-terminal part of its protein substrates and unfolds these before they are guided to HslV for hydrolysis. This chain is ATP-dependent protease ATPase subunit HslU, found in Nitratidesulfovibrio vulgaris (strain DSM 19637 / Miyazaki F) (Desulfovibrio vulgaris).